Consider the following 61-residue polypeptide: UPF0434 protein Avin_14770 (61 aa).

Belongs to the UPF0434 family.

The chain is UPF0434 protein Avin_14770 from Azotobacter vinelandii (strain DJ / ATCC BAA-1303).